Here is a 208-residue protein sequence, read N- to C-terminus: Somatotropin-B (208 aa).

An N-terminal signal peptide occupies residues M1–G25. H44 lines the Zn(2+) pocket. The cysteines at positions 77 and 181 are disulfide-linked. E190 lines the Zn(2+) pocket. A disulfide bond links C198 and C206.

It belongs to the somatotropin/prolactin family.

The protein localises to the secreted. Its function is as follows. Growth hormone plays an important role in growth control. The polypeptide is Somatotropin-B (gh-b) (Xenopus laevis (African clawed frog)).